A 214-amino-acid polypeptide reads, in one-letter code: NADH-quinone oxidoreductase subunit C (214 aa).

It belongs to the complex I 30 kDa subunit family. As to quaternary structure, NDH-1 is composed of 14 different subunits. Subunits NuoB, C, D, E, F, and G constitute the peripheral sector of the complex.

Its subcellular location is the cell inner membrane. It carries out the reaction a quinone + NADH + 5 H(+)(in) = a quinol + NAD(+) + 4 H(+)(out). Its function is as follows. NDH-1 shuttles electrons from NADH, via FMN and iron-sulfur (Fe-S) centers, to quinones in the respiratory chain. The immediate electron acceptor for the enzyme in this species is believed to be ubiquinone. Couples the redox reaction to proton translocation (for every two electrons transferred, four hydrogen ions are translocated across the cytoplasmic membrane), and thus conserves the redox energy in a proton gradient. In Francisella tularensis subsp. novicida (strain U112), this protein is NADH-quinone oxidoreductase subunit C.